A 278-amino-acid chain; its full sequence is N-terminal Xaa-Pro-Lys N-methyltransferase 2 (278 aa).

Residues G123, R128, D145, L174 to Q175, Q190, and H195 contribute to the S-adenosyl-L-methionine site.

It belongs to the methyltransferase superfamily. NTM1 family.

It localises to the nucleus. It carries out the reaction N-terminal L-alanyl-L-prolyl-L-lysyl-[protein] + S-adenosyl-L-methionine = N-terminal N-methyl-L-alanyl-L-prolyl-L-lysyl-[protein] + S-adenosyl-L-homocysteine + H(+). The catalysed reaction is N-terminal L-prolyl-L-prolyl-L-lysyl-[protein] + S-adenosyl-L-methionine = N-terminal N-methyl-L-prolyl-L-prolyl-L-lysyl-[protein] + S-adenosyl-L-homocysteine + H(+). It catalyses the reaction N-terminal L-seryl-L-prolyl-L-lysyl-[protein] + S-adenosyl-L-methionine = N-terminal N-methyl-L-seryl-L-prolyl-L-lysyl-[protein] + S-adenosyl-L-homocysteine + H(+). In terms of biological role, alpha N-methyltransferase that methylates the N-terminus of target proteins containing the N-terminal motif [Ala/Pro/Ser]-Pro-Lys when the initiator Met is cleaved. Specifically catalyzes monomethylation of exposed alpha-amino group of Ala or Ser residue in the [Ala/Ser]-Pro-Lys motif and Pro in the Pro-Pro-Lys motif. Predominantly functions as a mono-methyltransferase but is also able to di-/tri-methylate the GPKRIA peptide and di-methylate the PPKRIA peptide (in vitro). May activate NTMT1 by priming its substrates for trimethylation. This chain is N-terminal Xaa-Pro-Lys N-methyltransferase 2 (ntmt2), found in Danio rerio (Zebrafish).